The sequence spans 284 residues: Phosphonates import ATP-binding protein PhnC 2 (284 aa).

An ABC transporter domain is found at 24 to 264; the sequence is IRIDGISVRR…LEARIFPSLA (241 aa). 56 to 63 provides a ligand contact to ATP; that stretch reads GPSGVGKT.

Belongs to the ABC transporter superfamily. Phosphonates importer (TC 3.A.1.9.1) family. The complex is composed of two ATP-binding proteins (PhnC), two transmembrane proteins (PhnE) and a solute-binding protein (PhnD).

It localises to the cell inner membrane. It carries out the reaction phosphonate(out) + ATP + H2O = phosphonate(in) + ADP + phosphate + H(+). Part of the ABC transporter complex PhnCDE involved in phosphonates import. Responsible for energy coupling to the transport system. This Rhodopseudomonas palustris (strain ATCC BAA-98 / CGA009) protein is Phosphonates import ATP-binding protein PhnC 2.